A 337-amino-acid chain; its full sequence is Glyceraldehyde-3-phosphate dehydrogenase (337 aa).

NAD(+)-binding positions include 12-13 (RI), aspartate 34, and arginine 79. D-glyceraldehyde 3-phosphate is bound by residues 150–152 (SCT), threonine 181, 210–211 (TG), and arginine 233. Cysteine 151 acts as the Nucleophile in catalysis. Asparagine 315 is a binding site for NAD(+).

It belongs to the glyceraldehyde-3-phosphate dehydrogenase family. As to quaternary structure, homotetramer.

It is found in the cytoplasm. The enzyme catalyses D-glyceraldehyde 3-phosphate + phosphate + NAD(+) = (2R)-3-phospho-glyceroyl phosphate + NADH + H(+). Its pathway is carbohydrate degradation; glycolysis; pyruvate from D-glyceraldehyde 3-phosphate: step 1/5. The chain is Glyceraldehyde-3-phosphate dehydrogenase (GPD) from Ajellomyces capsulatus (Darling's disease fungus).